The primary structure comprises 144 residues: Large ribosomal subunit protein uL15 (144 aa).

The tract at residues 1–51 (MELNSIKPGSGSKHAKRRVGRGIGSGLGKTAGRGHKGQKSRAGGYHKVGFE) is disordered. Over residues 21–31 (RGIGSGLGKTA) the composition is skewed to gly residues.

Belongs to the universal ribosomal protein uL15 family. In terms of assembly, part of the 50S ribosomal subunit.

Its function is as follows. Binds to the 23S rRNA. This chain is Large ribosomal subunit protein uL15, found in Leptothrix cholodnii (strain ATCC 51168 / LMG 8142 / SP-6) (Leptothrix discophora (strain SP-6)).